The chain runs to 95 residues: Putative regulatory protein Daud_1598 (95 aa).

Belongs to the RemA family.

This is Putative regulatory protein Daud_1598 from Desulforudis audaxviator (strain MP104C).